The chain runs to 194 residues: UPF0232 protein in recF-gyrB intergenic region (194 aa).

The span at 1 to 14 shows a compositional bias: acidic residues; that stretch reads MTGPFDDDGPEEDA. A disordered region spans residues 1 to 81; sequence MTGPFDDDGP…GPGPDARDPQ (81 aa). The segment covering 30 to 52 has biased composition (basic and acidic residues); it reads DLVRRTLEEARGAARSQGKDVGR.

Belongs to the UPF0232 family.

This Mycolicibacterium smegmatis (Mycobacterium smegmatis) protein is UPF0232 protein in recF-gyrB intergenic region.